Consider the following 457-residue polypeptide: Peptidyl-prolyl cis-trans isomerase FKBP5 (457 aa).

Met-1 carries the post-translational modification N-acetylmethionine. Residues 1–26 form a disordered region; that stretch reads MTTDEGAKNNGESPTATVAEQGEDIT. Ser-13 carries the phosphoserine modification. 2 PPIase FKBP-type domains span residues 50–138 and 165–251; these read GDKV…LDFK and GATV…KSFE. TPR repeat units lie at residues 268-301, 317-350, and 351-384; these read AAIV…LEME, LAAF…DSAN, and GKGL…NPQN. Residues 420 to 457 are disordered; sequence DAKEEANKAMGKKTSEGVTNEKGTDSQAMEEEKPEGHV. Ser-445 carries the post-translational modification Phosphoserine.

Part of a heteromultimeric cytoplasmic complex with HSP90AA1, HSPA1A/HSPA1B and steroid receptors. Upon ligand binding dissociates from the complex and FKBP4 takes its place. Interacts with functionally mature heterooligomeric progesterone receptor complexes along with HSP90 and TEBP. Interacts with IFI44L; this interaction modulates the kinase activity of IKBKB and IKBKE. Interacts with IKBKB and IKBKE.

It is found in the cytoplasm. The protein localises to the nucleus. It catalyses the reaction [protein]-peptidylproline (omega=180) = [protein]-peptidylproline (omega=0). Inhibited by FK506 but not cyclosporin. In terms of biological role, immunophilin protein with PPIase and co-chaperone activities. Component of unligated steroid receptors heterocomplexes through interaction with heat-shock protein 90 (HSP90). Plays a role in the intracellular trafficking of heterooligomeric forms of steroid hormone receptors maintaining the complex into the cytoplasm when unliganded. Acts as a regulator of Akt/AKT1 activity by promoting the interaction between Akt/AKT1 and PHLPP1, thereby enhancing dephosphorylation and subsequent activation of Akt/AKT1. Interacts with IKBKE and IKBKB which facilitates IKK complex assembly leading to increased IKBKE and IKBKB kinase activity, NF-kappaB activation, and IFN production. This chain is Peptidyl-prolyl cis-trans isomerase FKBP5 (FKBP5), found in Pongo abelii (Sumatran orangutan).